The sequence spans 383 residues: Acetylornithine deacetylase (383 aa).

Residue H80 coordinates Zn(2+). D82 is a catalytic residue. D112 serves as a coordination point for Zn(2+). E144 is an active-site residue. Residues E145, E169, and H355 each coordinate Zn(2+).

This sequence belongs to the peptidase M20A family. ArgE subfamily. In terms of assembly, homodimer. Zn(2+) serves as cofactor. The cofactor is Co(2+). Requires glutathione as cofactor.

It localises to the cytoplasm. The catalysed reaction is N(2)-acetyl-L-ornithine + H2O = L-ornithine + acetate. The protein operates within amino-acid biosynthesis; L-arginine biosynthesis; L-ornithine from N(2)-acetyl-L-ornithine (linear): step 1/1. Catalyzes the hydrolysis of the amide bond of N(2)-acetylated L-amino acids. Cleaves the acetyl group from N-acetyl-L-ornithine to form L-ornithine, an intermediate in L-arginine biosynthesis pathway, and a branchpoint in the synthesis of polyamines. This Escherichia coli O157:H7 protein is Acetylornithine deacetylase.